We begin with the raw amino-acid sequence, 7081 residues long: MSKQYYSFKKGVGSGLEDNTFMTLWDFLESWIIQNDWVAIFFIILLGIIFEIILMKACASFWKKPTLPEKGSSDVQETEDSCPKSRKLAPENWSVINSSSGERVGTFLEKRITSSLTSEEKECNFEDRILFSREILWSGTSESEDQVSPSSESHVPSSNGISSSLPLFYSEVEETCLSHTEHPDREYETIQFSSKKLFSMMKTNKNKNSGFSSDLSFSASRFTVENEDLDVAPCPLAHLFLSRDQVRLLEENVRNQIPSKPKTKLGSRTTYQCSRSQESLNQNQPSVGMVISVQAQDSFPGQNAFQNQGLYEVQFTSQAQYINHNQESIKSQPESKASNFAQPEDVMKKPFSSSTQDSFQSQDLDRNQHFVEVPSIVEAKYSVKGLESDEHLGEDQHCVWFIDSNKVKYSIKGQDTIFKNAEFLVLTLNPNLVTEDMPQLRSVKAQGQQQIVSSELNQDSVYSSVPLLSTIKGQKNRRKTPDSKSKLSLNVPSLKAKKTPTSQVFQITVCHTLKNRNELGCKNNTEKKELHERKDISDIALHLISVSKLILPYVKNYSRKQLVKVMPGLIKCGHFLQKQNKSPDTEKINYAGPLEETGISDITKKEKEYDKENKRLKNISPKMLPQLEQSFMVNTVQLKAPCLLVETNGKSKESLKDSITQAKGIGITEFHVLNSKKPFDLHIPKHKTSLEEAISKPMQKLVSSPEMESNNRMKIQEDLQSSENSHLQLSNGEELPTSTPKTQRCFPRENTQKQKDFLELVLELSNVGLLISPGSKMHKSSEELEAIKIQVNTESVNLKESKPLILNVTEDSDLRESEELECNTGSNITNMHQDKETSDAFHSATYTTISQLPDTETHSISKAKADTLRIIRLSHSASKQEKLPDEKETQNAEYIDKSCTFKKPQQCDRKEQEKEANSELTQGFRFSIHLKQKPKYVKFQMEQISSGSSKAPNKEQEVQPQTLSTQTILENSPCPMMDPFQVEKVKQSTDRPTDRESAGDPKNPLTMPENLPVGELLIETTEYSVPFGGNLQKTTDSHIAEEKEDVKRYLPAVALGSFNNHLLTLPYFKRQEIKKKLSETKSVLSVKYVIMKVKKPAISLMPYINICGTSNHRKKMGGNFEIIIKQILQDKIAAGMLLNVIYPPMSILPNTRMYSRLNAENHSHIKLVQEESQIEREEKYPYFINEGNESQNTLDAKLQDEVKGVKETLPKAVLHDSCNLGLDAHLEKEIKTEKEMHQPIPFTETIIESVVSPIMELSHAENVKSTQKTQTDCKCTADSETPSPISGKSLIGDPLNQTRESYIPSNGSDTREMGYCFAEEKTEIPKDLPATSPETFNYCTPVLSCSKVMKKRVTFALTTSTAKPKCVNTKAVKPSISETVSVTSHRKKSELDFKTKFKKINQTKGLVPECLNTLCSPMHSRLQREFCLPASQLKQGETADKTYTDVFAKNSISHDREEKLQDGKEEEHKVLLEAAPQLSQHLGSEAGQMKEIHLESDPVLNCLTLELHINGQRLQHQTGFEQTTLETSLQMGPLEAEELQKANETENDIKVLGGPKIPPPKALQALENSDGLILNAYQKDNELVKSDEELNQPGSTNIQVQPQTHFTQTILKSTSCPTLDQFPFEKVESHVRFSPLKSGEAKVDEIIFYAREGGISSDSSHQKEQAGGTEKKETAIFGSCMPALSTPKTTRNLKQFSDMKTLVNPKCGIIKAKKPSISYMLNIRAGAGPKRRKELSCNLTTKMKELHQGKKGVDETYAFLTMTPDINKYSKVETEKDTLREKRLSSTQVKQDTSPHEDSITSRDIKETLLQDEEQEERKQEALLKVIPQHLQHFMFRSGQGKDLDFHKLENQGSRKILFVTKQDVPQQLQPAEPIQREETKKCLQTQNGTICTVNSKLLPLKSEDSVNGEVLTGAIKRGVPTDRKCMGEQHNSGKGEKAEFNKDLQATVLELQKSPHGGEAQKANLTDMESGSSNAMNMNVQHEREDKNIQKMLTESVPCYSQHLRFSTHQMKDPDPCKSGSEPKSPEGRSWNLSHIVQKTKQETHFRETVLEPISGYMMKQSPHMQEGIKCMEGLKTSFPKTGKSKIGSIPRDTPWDENPRRKWDSSISEKTAWNQKNLQTVLKPLDFSSLMSSEYESRSYTLEFIGKKSMSPKCVTLKAKQLRILQLFNIIRYSTENHRKKKQHRFKYKMKGKQWYTSIGEALLSATEYAKSTTSKSMIDKLLYNTAARCILSNRTRRQNLDGHITEEKEEVQENVAAIFLGLLDFFMPVLSDSKNQRNTAQLSEKEIIFNAKCLTMKEKKSSISQIHKINRESTRKHRKKCKSYLKTVSNRKCQENHGHITEEEEEVQENSPATFLGPLDFFMPVLSDSKNQINTIQLSERKIILNPKCLTMKEKKPPISQIHKISGQFTTKHRKKLESNLKTKLKAMWQGENVADTFPNTTSFTPDSSDIKRQSGFQTEIDMRISGLSHTQPTQIESLAEGIARYSDPIDKRRTSNLVKGAKLHDRESGEEKQEHLTEMDPFYAENFMANTYLRKDRHLGKSEDVLLGETFFSKSQIYKGNSEKNVKIEKNKNGKESLKVGLARMEKSDNCAELSEATDDAISNKYDKQNIGHSVLKENAFCNLAAIVPDSVGRHSPASEEMKRQNGRLKMADRSSPQGRPLQAKQSAVSQSPDTAGYAVVSNNKEQKQNFKAQKTEAEVDLIDQEAKINVAEEFNPESVFFSKIHPLQIENKKEFKTADWKTRADPKTFALPKKQQELCVSGTIWSYPNPYTSISPKIIRHKDKAKTADVESTMHTKQIKLKAKRITVSQLLEYGTASNKKELRGNIQQQKSFQLSKNAVHRVLKAVYDSGYCVSSIKKLTEVKMEKDKPKDRTCILPQPKLEKPLKEMQRSLSGCTDMSSILRKQEQDIREKEQKHQSISEDISQYYIGPLRISSQQINYSSFDAPRIRTDEELEFLIAQRAKEKDVGIAKHSVSIPWEREGSKRLDIPLNSKGQNIFFTELDTSQQKTCQEQELLKQEDISMTNLGSMACPIMEPLHLENTGKVTEEEDVYINRKISSHVLGKEGLKETDIFVGSKGQKFLCTNSEVQHKVPAEQKEQVNPDHVPESILDSESFLSKDPLHLKQAVNTARKENVTISESFNENLWGKEQSKLDITLKSNRQKMDFSKKLRMKHLSNYYQNKENILESVLPCILHQLYIENPKKEGSAEEIMSSKVLSPMVEKASHEVGIPVDQPPCSEGIHLNIKGRKEHPQESTHEAFPASVSHSLMDVLQIKSPKVKKALKAINSLGYLTSNTKGIGLLFPRQAEKEEKYTYKALPKPASHSKTDLFQFNASMQQEKLDAMDIPHYDYLTSQTREAVKQMDVIVGYTQNSKKRQDLLKTGQKWQYLPISYENFWEHISCPQKYPCLLQHLMPQEKEALSEGGNLSSRTPGLDLFSADQLSTITKNRLEWIVPLISPRQMKKQDSMLPLGSYHKTIKYASLLFPKGMKSSDGVQVFDLISNNSSPKLRLGKKIETQKANEKVQKEVCLPITLHSLSASMPILQESKGQKDSVEQVIRKGVICHKRRTSKWKKSVFSHILNTSDCGASSNRLEMQWNMTDKMVNVKHRMSEIDLVAAKICESILSLPHFKLNKETIDGVISSNVKSTKQHISQGKNDRVKAMDMKRIKSPNIILKPRKSSLSHILSIKEFPLLLDIIKQEGKMQEGKGKSSMKLTNLCTSLPSLSHSNSNSRTKAGKDKSGTLKGCLPPLKLQASSNARRVSSAESINRDSLSNVIESKCFPQKKKEDRENIVDVKDVMGLKCITLKGKKSLFRHLLHGKEPQRSNKKLEKMTQEDESNLNVVQNKLCASILSPPHLEWNPRIKEVYMRGITRFCLSSSTQQELSDTMEKCEQPIDDSLSSIEKAKHMPQKDKDRVEKALEKIMHSKRIALEVKQPSIFQELELNIKEKGGKIQEDKEVEIWSKPFASISFLPYSKVGTIEGEEAMRIKMRSSFSQPNLQESSDTEKTAYEKCISDNISNSVKKALESILQKEQRQKMEKIRALKKMKSSISQGIQLDIKEQEKRIEHIKGEPSVLLTNACASIPSPSHLQLDTRREKAEYVTEITRYYLPELSHQKSSEAGEKADGVASKGDITIKVQKAKDYMQQKEDDEVKISAKKDIMHPEDKGLKAKKALSQDLPLNTKEPGKMDQEAQEQGKEDREGEEQGKEDRRGAGQEKVDREDKEQGKMDHEVEEQQKADGVGIEQGKMDGDKNEQERVLFLYLPSNSSLTHYILDTRIEGEEDQQGIIRPGILQPRHQKSSETGKKANGVPSEGDSASEVQKAKDYMQQKEEDEVKISAEKDLMHPEDKDLKGKKALSQNLPLNPKEPGKRDGEGQEQGKEDGEGEEQGNRDGETEEQQQADGVGTEQEKRDGHKSKQETVLFLHLPSESSLTCYELNTRKEGEEDLQGIIKSATLQLRQQKSFDAGKIAHTKSFGVDSSNDVKTVQEYKPQKEVDRGKTVSVDYIMQPEGTIFEAEQLSLPHTLNIPGSSGSKTREVLTNIKEKLRHVQERKSELDVFLTIPSLSHCKLDKRTAGKKEEQGVTRSFLPPSWHMESSDTGKLKYTLSYLNDITGDSNRTKYMAQIQKDKANISEKSVMHPEYIAVKAEKSPLSHILKTKELQVNISQQGEKAQEGEVEIVVLLSKTCPFVTSSAFLELDSIKEEEGEPRITRSFMPHLEIQESLPSRQTAPTKPTESLVKKEKQLLPQKEDRVQTVSMHGLMHPNGAVFKAKTSAPPQVFSITEHSPLSKRKEPQWGMKERAGQKQDRTGRPHVILTKTHPFMPSLSHHRFSPSQPKLPISSGAGKSRLANSNEGISSHKVILKANQQMPYKEAKDRVKIEGREGRILPKRIHLRAEALPLALLCNGKNYSLHIEEQGEGVQESKKEPGVVPRKSASFPPPPFYLNCDTRRNEKEGTLGKTQFSFPPLKIQDSSDSGKKAYTESLHGYTLSNSKGPVQPTAQGEEKGGLRIDMEDKMLPKCTDLKAKQLLLSDILNTKKLQWKSKEQKRKIQEDKNKQVKGLPSINTSLLTPPYLKFDTTEGQENVIRIAKVSLPQSRSKESSDAGRIACPEATHGELSSDVKQLKAHLLQKEEKDREKVADMTSVLDPNKMYLKAKKSPVLHTHSFSDLQWKTREQEEEKVQKVKSGPGVMLSKSPSRSSPLHLNVNTGFQEESIPILTRPSFPLVKLQVSPDTEGGTCIRPIAGDILIYLQKGKHVSQNKEEDDVQIVSILIFPKHQEEKVQECEGEPGVVLTKSTSLPSLSQLELDKETHLGNEMLRLKRPILRRISHIGETVHRESVVGDIPKDVKNEKQHIPQKEERNQKKIIDMRGTDITLKSKKSPRSCMLHRTELHVNIGGQGRKEHEGQDKPPGMIQRKMCILFSKPLPSNLKLERATHADEERLGGKTSFVLPLMPSALPDTEKTADAEARSGDVRKGKPHRSQKENRHEVKTIDMRFRIHCQEARISPMSHILNAKELVLNINKLEKKVHKDKDEACVVLSRTFLSIPSAPPLYLDSGNKTDKDTPGITGSSCPQRTLHVPSNTQKITNRDSVEGVDKNVVKQAEQYVPRPEAEQQLTSNFMISVQQRNQPSRVRSEEDLNQLVLNSRDEDIYFTGFGTIRSGKRPEWLFTGKKAQPVKYKTETLTAFLSYPTMDATKMGGLEEDTEIMDNLNHKISPKASVSLIRKISKELYVTLGTPANSKGFSVSERYAHQQETSSKVSPELAGSCKFDKPKEDGQSNDRISKMFSPKVLAPQTKGSLKKISIVTNWNAPQNIEEQDIVMKKQVIRRCEHGHKTRTNTILSKFPLQSGKQKTPSETDVDKKTTAHLSLQMLPGIHMDMTEIDPAKGGRKQALLISEQEEGVLEFLPKSLFPPWTFQFQSGDLEEKHQTDANTNINLEQKKLEMDNDSTVNQKEGKLKIGTNRALHLQEEKTEMHKARTANLEKERGRMDTSSSAHPHLLSLKAEESQMKTQVITHRENSRLIMQKQKKELEASNAKQSIQLQKLFQRNVLDSFYSYVPLSPKRKDQKGRLTIRDLKRELSTKYLTMKIQNHPIPQMLNITGRGTPSNRKKLEYDVKLKNIASWSKDVSGIFIRSLSISIMRSPHTDPKTNLEREKRICLPKFQEKSPNTSEMSKRDTLTIVKGEQNFTNTVPQDPQPFAVDKQQMQKLPNVKSEANLRSEMNKKYLKAQTKERIVPEHDVSRIIKKPDLRIIEQEEKILKRILTPTECPSMLEDPKLPKQRDQSEPVWDMTTQKVQQQKAFPGTVPIPPQVKSSEVKIVADSTNAEHLLPICEATKAISESQVKNMIQDKVSSDKLDNIQAYKPDDLKSPPFPEGPDTISTAIYPKTQHKSLLEQFTPKEKNKLTSHLESKALEIQLNLIPEMARKSLQMFNFYPKGTISKDNSWRFYSRHKTMNFMSLEGTDTIEPNSKHKHQKDSPLASNMKTLIVDVSSDSEETITKLQSINKLENGTSAVTSASEMLLPHTLQNHSVKEKGKLLMHFSVKTLEIQMKAFPRIVRESYAMTSAHERKKPLSNCIHPGFTGPKRQNRILLLSEEKSLHQIDLDLQYKYLRFLLGLPVGSTFPKPNVLPKHSKLNTIAVCKNVNAGGQSGSLSIDTELLEQHISFKKQSPHENSSLIRKFPQPTLVCASDRDLHSPRKKDTQVLSESEFHVTPEKNKQYHVWFQERNTCESVDLRTQRNATGSAVSCETQISEDFVDIQTDIESPADLDECSCLEVSESEECVFLEANSYLSQESENILFELQTGIPLENVYKITTDLKSFYSEDSGSHCTRECRKETLIITPPSCKSHKSRKYRSSSKMKSPDWLCHSSSNTAEIQSRSSSVSFSEEKISWTTKSRTSYSSAPLTESNIKSHLAKNQGKSHRHPESQERKKARSDLFRKNSSHWDHDYSCTHSKGKRDRKKRVYDYESERLDCFQSKHKSASKPHHDDINFYSERKQNRPFFFACVPADSLEVIPKTIRWTIPPETLRKRNFRIPLVAKISSSWNIWSSSKKLLGSLSGSLTTVFHS.

A helical membrane pass occupies residues 37 to 57 (WVAIFFIILLGIIFEIILMKA). 2 LRR repeats span residues 233–256 (PCPL…VRNQ) and 420–445 (NAEF…SVKA). The disordered stretch occupies residues 717 to 745 (EDLQSSENSHLQLSNGEELPTSTPKTQRC). Polar residues predominate over residues 718–742 (DLQSSENSHLQLSNGEELPTSTPKT). Residues 865–890 (ADTLRIIRLSHSASKQEKLPDEKETQ) form an LRR 3 repeat. The tract at residues 943–1009 (QISSGSSKAP…DPKNPLTMPE (67 aa)) is disordered. Residues 958–970 (VQPQTLSTQTILE) show a composition bias toward polar residues. Residues 981 to 999 (QVEKVKQSTDRPTDRESAG) are compositionally biased toward basic and acidic residues. One copy of the LRR 4 repeat lies at 1050–1075 (LPAVALGSFNNHLLTLPYFKRQEIKK). Polar residues-rich tracts occupy residues 1274–1286 (KCTA…SPIS) and 1295–1304 (LNQTRESYIP). Residues 1274-1304 (KCTADSETPSPISGKSLIGDPLNQTRESYIP) form a disordered region. Residues 1501–1527 (NCLTLELHINGQRLQHQTGFEQTTLET) form an LRR 5 repeat. Composition is skewed to basic and acidic residues over residues 1773–1784 (ETEKDTLREKRL) and 1793–1804 (TSPHEDSITSRD). Disordered regions lie at residues 1773–1804 (ETEK…TSRD), 1954–1973 (KSPH…ESGS), 2008–2031 (STHQ…EGRS), and 2083–2103 (TGKS…NPRR). Positions 1964–1973 (ANLTDMESGS) are enriched in polar residues. An LRR 6 repeat occupies 2373 to 2397 (KNQINTIQLSERKIILNPKCLTMKE). Residues 2637–2680 (GRHSPASEEMKRQNGRLKMADRSSPQGRPLQAKQSAVSQSPDTA) form a disordered region. Over residues 2668 to 2678 (AKQSAVSQSPD) the composition is skewed to polar residues. LRR repeat units follow at residues 2727–2749 (SKIH…KTRA), 2832–2855 (IQQQ…VYDS), 2862–2889 (IKKL…KLEK), 3433–3458 (LSSR…RLEW), and 3630–3653 (ILSL…NVKS). Residues 3730–3756 (SLSHSNSNSRTKAGKDKSGTLKGCLPP) form a disordered region. One copy of the LRR 12 repeat lies at 3875–3898 (MRGITRFCLSSSTQQELSDTMEKC). Disordered stretches follow at residues 4119–4260 (ELSH…DGDK), 4293–4428 (QGII…KQET), 4729–4756 (QESL…LLPQ), 4794–4817 (SPLS…QDRT), 4831–4859 (MPSL…RLAN), 4928–4955 (GVQE…YLNC), 4966–4985 (LGKT…SDSG), and 5191–5212 (QKVK…SPLH). 6 stretches are compositionally biased toward basic and acidic residues: residues 4121 to 4133 (SHQK…EKAD), 4147 to 4176 (KAKD…DKGL), 4192 to 4245 (EPGK…EQQK), 4329 to 4361 (QKAK…DLKG), 4375 to 4401 (EPGK…NRDG), and 4415 to 4426 (EQEKRDGHKSKQ). Residues 4731–4743 (SLPSRQTAPTKPT) show a composition bias toward polar residues. 2 stretches are compositionally biased toward basic and acidic residues: residues 4746–4756 (LVKKEKQLLPQ) and 4798–4817 (KRKE…QDRT). A compositionally biased stretch (polar residues) spans 5203-5212 (KSPSRSSPLH). One copy of the LRR 13 repeat lies at 5311 to 5336 (LSQLELDKETHLGNEMLRLKRPILRR). Positions 5467–5496 (LPDTEKTADAEARSGDVRKGKPHRSQKENR) are disordered. Residues 5469 to 5496 (DTEKTADAEARSGDVRKGKPHRSQKENR) show a composition bias toward basic and acidic residues. An LRR 14 repeat occupies 5522–5545 (LNAKELVLNINKLEKKVHKDKDEA). Disordered regions lie at residues 5564-5583 (LDSG…SSCP) and 5763-5792 (QQET…SNDR). The span at 5779–5792 (KFDKPKEDGQSNDR) shows a compositional bias: basic and acidic residues. LRR repeat units follow at residues 5901 to 5924 (KQAL…LFPP), 6259 to 6282 (PDLR…ECPS), 6419 to 6442 (HLES…SLQM), 6552 to 6575 (HFSV…SYAM), and 6613 to 6637 (QIDL…TFPK). 2 disordered regions span residues 6859–6878 (CKSH…SPDW) and 6916–6950 (APLT…RSDL). Residues 6860-6871 (KSHKSRKYRSSS) show a composition bias toward basic residues. Residues 6937–6950 (HPESQERKKARSDL) are compositionally biased toward basic and acidic residues. An LRR 20 repeat occupies 7012–7036 (NRPFFFACVPADSLEVIPKTIRWTI).

It is found in the membrane. The chain is Leucine-rich repeat transmembrane protein CCDC168 from Homo sapiens (Human).